Reading from the N-terminus, the 470-residue chain is Sulfate adenylyltransferase subunit 1 (470 aa).

Positions 22-238 (KELLRFITCG…ETIKIDYAYT (217 aa)) constitute a tr-type G domain. Positions 31–38 (GSVDDGKS) are G1. 31 to 38 (GSVDDGKS) is a binding site for GTP. The G2 stretch occupies residues 89-93 (GITID). The tract at residues 110-113 (DTPG) is G3. GTP contacts are provided by residues 110–114 (DTPGH) and 165–168 (NKMD). Positions 165-168 (NKMD) are G4. The interval 202–204 (SAL) is G5.

This sequence belongs to the TRAFAC class translation factor GTPase superfamily. Classic translation factor GTPase family. CysN/NodQ subfamily. Heterodimer composed of CysD, the smaller subunit, and CysN.

The enzyme catalyses sulfate + ATP + H(+) = adenosine 5'-phosphosulfate + diphosphate. It functions in the pathway sulfur metabolism; hydrogen sulfide biosynthesis; sulfite from sulfate: step 1/3. Functionally, with CysD forms the ATP sulfurylase (ATPS) that catalyzes the adenylation of sulfate producing adenosine 5'-phosphosulfate (APS) and diphosphate, the first enzymatic step in sulfur assimilation pathway. APS synthesis involves the formation of a high-energy phosphoric-sulfuric acid anhydride bond driven by GTP hydrolysis by CysN coupled to ATP hydrolysis by CysD. This Francisella tularensis subsp. tularensis (strain WY96-3418) protein is Sulfate adenylyltransferase subunit 1.